Consider the following 821-residue polypeptide: Phenylalanine--tRNA ligase beta subunit (821 aa).

Positions 39 to 149 (RTWAEGVVVG…DAVTVGEDVR (111 aa)) constitute a tRNA-binding domain. The B5 domain occupies 409 to 503 (PLERTLTLRL…RLYGYDRFEE (95 aa)). Mg(2+) contacts are provided by D481, D487, E490, and E491. In terms of domain architecture, FDX-ACB spans 724–820 (STYPASDRDL…LVEKYAVTLR (97 aa)).

The protein belongs to the phenylalanyl-tRNA synthetase beta subunit family. Type 1 subfamily. As to quaternary structure, tetramer of two alpha and two beta subunits. Requires Mg(2+) as cofactor.

The protein resides in the cytoplasm. The enzyme catalyses tRNA(Phe) + L-phenylalanine + ATP = L-phenylalanyl-tRNA(Phe) + AMP + diphosphate + H(+). This Thermosynechococcus vestitus (strain NIES-2133 / IAM M-273 / BP-1) protein is Phenylalanine--tRNA ligase beta subunit.